The sequence spans 248 residues: Type III pantothenate kinase (248 aa).

6–13 serves as a coordination point for ATP; the sequence is ELGNSQLK. Substrate-binding positions include tyrosine 94 and 101–104; that span reads GVDR. Aspartate 103 serves as the catalytic Proton acceptor. Residue aspartate 123 participates in K(+) binding. ATP is bound at residue threonine 126. Substrate is bound at residue threonine 179.

It belongs to the type III pantothenate kinase family. As to quaternary structure, homodimer. Requires NH4(+) as cofactor. K(+) serves as cofactor.

The protein resides in the cytoplasm. It catalyses the reaction (R)-pantothenate + ATP = (R)-4'-phosphopantothenate + ADP + H(+). It participates in cofactor biosynthesis; coenzyme A biosynthesis; CoA from (R)-pantothenate: step 1/5. Catalyzes the phosphorylation of pantothenate (Pan), the first step in CoA biosynthesis. This is Type III pantothenate kinase from Hydrogenovibrio crunogenus (strain DSM 25203 / XCL-2) (Thiomicrospira crunogena).